We begin with the raw amino-acid sequence, 270 residues long: Phosphatidylglycerol--prolipoprotein diacylglyceryl transferase (270 aa).

Helical transmembrane passes span 10–30 (VAVA…LVGI), 56–76 (LIFW…VLFY), 92–112 (WKGG…AWWF), 120–140 (FFQL…AGRI), 175–195 (SQLY…NLYA), 202–222 (MAVS…VEFV), and 237–257 (VTMG…LIWL). Arg139 provides a ligand contact to a 1,2-diacyl-sn-glycero-3-phospho-(1'-sn-glycerol).

This sequence belongs to the Lgt family.

It localises to the cell inner membrane. The enzyme catalyses L-cysteinyl-[prolipoprotein] + a 1,2-diacyl-sn-glycero-3-phospho-(1'-sn-glycerol) = an S-1,2-diacyl-sn-glyceryl-L-cysteinyl-[prolipoprotein] + sn-glycerol 1-phosphate + H(+). It participates in protein modification; lipoprotein biosynthesis (diacylglyceryl transfer). Its function is as follows. Catalyzes the transfer of the diacylglyceryl group from phosphatidylglycerol to the sulfhydryl group of the N-terminal cysteine of a prolipoprotein, the first step in the formation of mature lipoproteins. In Pseudomonas syringae pv. tomato (strain ATCC BAA-871 / DC3000), this protein is Phosphatidylglycerol--prolipoprotein diacylglyceryl transferase.